The following is a 199-amino-acid chain: Shikimate kinase (199 aa).

ATP is bound at residue 12-17 (GAGKST). Ser16 is a binding site for Mg(2+). Asp34, Arg58, and Gly80 together coordinate substrate. Residue Arg117 coordinates ATP. Arg136 lines the substrate pocket. The tract at residues 174–199 (VSGGDRKSSEAERSGAPLRKSSEVVK) is disordered. Residues 177 to 186 (GDRKSSEAER) are compositionally biased toward basic and acidic residues.

It belongs to the shikimate kinase family. Monomer. Requires Mg(2+) as cofactor.

The protein resides in the cytoplasm. The catalysed reaction is shikimate + ATP = 3-phosphoshikimate + ADP + H(+). It participates in metabolic intermediate biosynthesis; chorismate biosynthesis; chorismate from D-erythrose 4-phosphate and phosphoenolpyruvate: step 5/7. Functionally, catalyzes the specific phosphorylation of the 3-hydroxyl group of shikimic acid using ATP as a cosubstrate. The polypeptide is Shikimate kinase (Mycobacterium leprae (strain TN)).